The primary structure comprises 289 residues: UPF0276 protein BB1291 (289 aa).

This sequence belongs to the UPF0276 family.

The polypeptide is UPF0276 protein BB1291 (Bordetella bronchiseptica (strain ATCC BAA-588 / NCTC 13252 / RB50) (Alcaligenes bronchisepticus)).